Here is a 246-residue protein sequence, read N- to C-terminus: 1-(5-phosphoribosyl)-5-[(5-phosphoribosylamino)methylideneamino] imidazole-4-carboxamide isomerase (246 aa).

The Proton acceptor role is filled by D7. D129 functions as the Proton donor in the catalytic mechanism.

It belongs to the HisA/HisF family.

It localises to the cytoplasm. It carries out the reaction 1-(5-phospho-beta-D-ribosyl)-5-[(5-phospho-beta-D-ribosylamino)methylideneamino]imidazole-4-carboxamide = 5-[(5-phospho-1-deoxy-D-ribulos-1-ylimino)methylamino]-1-(5-phospho-beta-D-ribosyl)imidazole-4-carboxamide. The protein operates within amino-acid biosynthesis; L-histidine biosynthesis; L-histidine from 5-phospho-alpha-D-ribose 1-diphosphate: step 4/9. In Buchnera aphidicola subsp. Acyrthosiphon pisum (strain 5A), this protein is 1-(5-phosphoribosyl)-5-[(5-phosphoribosylamino)methylideneamino] imidazole-4-carboxamide isomerase.